Here is a 285-residue protein sequence, read N- to C-terminus: Phosphatidylglycerol--prolipoprotein diacylglyceryl transferase (285 aa).

Transmembrane regions (helical) follow at residues 17-37 (ALGL…GLTL), 43-63 (WYAL…LFLL), 78-98 (LVFW…VLFY), 113-133 (WEGG…IWWV), and 139-159 (LSWL…LFLG). Arg160 contacts a 1,2-diacyl-sn-glycero-3-phospho-(1'-sn-glycerol). Helical transmembrane passes span 195–215 (LYEA…QFFA), 223–243 (GKLA…VEWF), and 256–276 (GLTM…WLII).

The protein belongs to the Lgt family.

It is found in the cell inner membrane. The enzyme catalyses L-cysteinyl-[prolipoprotein] + a 1,2-diacyl-sn-glycero-3-phospho-(1'-sn-glycerol) = an S-1,2-diacyl-sn-glyceryl-L-cysteinyl-[prolipoprotein] + sn-glycerol 1-phosphate + H(+). It participates in protein modification; lipoprotein biosynthesis (diacylglyceryl transfer). Catalyzes the transfer of the diacylglyceryl group from phosphatidylglycerol to the sulfhydryl group of the N-terminal cysteine of a prolipoprotein, the first step in the formation of mature lipoproteins. The protein is Phosphatidylglycerol--prolipoprotein diacylglyceryl transferase of Zymomonas mobilis subsp. mobilis (strain ATCC 31821 / ZM4 / CP4).